Consider the following 122-residue polypeptide: Beta-2-microglobulin (122 aa).

An N-terminal signal peptide occupies residues 1-22 (MMARIFILALLGQLCFLPYLDA). The Ig-like C1-type domain occupies 27-115 (PKVQVYSRHP…HLTLQEPKVV (89 aa)). A disulfide bond links cysteine 47 and cysteine 102.

This sequence belongs to the beta-2-microglobulin family. Heterodimer of an alpha chain and a beta chain. Beta-2-microglobulin is the beta-chain of major histocompatibility complex class I molecules.

Its subcellular location is the secreted. Component of the class I major histocompatibility complex (MHC). Involved in the presentation of peptide antigens to the immune system. This Trichosurus vulpecula (Brush-tailed possum) protein is Beta-2-microglobulin (B2M).